The following is an 85-amino-acid chain: Beta-toxin BmKAS (85 aa).

The N-terminal stretch at 1 to 19 is a signal peptide; that stretch reads MKTVIFLIVSSLLLIGVKT. The region spanning 20–82 is the LCN-type CS-alpha/beta domain; sequence DNGYLLDKYT…LWNYNTNKCN (63 aa). Cystine bridges form between cysteine 31–cysteine 81, cysteine 35–cysteine 56, cysteine 42–cysteine 63, and cysteine 46–cysteine 65.

As to expression, expressed by the venom gland.

The protein localises to the secreted. In terms of biological role, beta toxins bind voltage-independently at site-4 of sodium channels (Nav) and shift the voltage of activation toward more negative potentials thereby affecting sodium channel activation and promoting spontaneous and repetitive firing. It binds to distinct receptor sites of mammal and insect voltage-gated sodium channels. It displays antinociceptive effect in rat models, which is due to its specific modulation of sodium channels of sensory neurons. It also significantly stimulates the binding of [3H]-ryanodine to ryanodine receptors on the sarcoplasmic reticulum of the skeletal muscle through an indirect mechanism. And it promotes noradrenaline release from the rat hippocampus slice. The protein is Beta-toxin BmKAS of Olivierus martensii (Manchurian scorpion).